The sequence spans 497 residues: Amino acid oxidase fsqB (497 aa).

9 residues coordinate FAD: Val-14, Phe-15, Asp-38, Asn-53, Ala-57, Asn-58, Arg-63, Val-64, and Val-211. Cys-414 bears the S-8alpha-FAD cysteine mark. 2 residues coordinate FAD: Phe-447 and Lys-448.

Belongs to the MSOX/MTOX family. As to quaternary structure, dimer. FAD is required as a cofactor.

The catalysed reaction is (2S,4S,5S)-2-amino-6-(3,4-dihydroxyphenyl)-4-hydroxy-5-(methylamino)hexanoyl-[peptidyl-carrier protein] + O2 = (2S,4S)-2-amino-4-[(3S)-7,8-dihydroxy-1,2,3,4-tetrahydroisoquinolin-3-yl]-4-hydroxybutanoyl-[peptidyl-carrier protein] + H2O2. The enzyme catalyses N-methyl-L-dopa + O2 = (3S)-7,8-dihydroxy-1,2,3,4-tetrahydroisoquinoline-3-carboxylate + H2O2. It carries out the reaction N-methyl-D-dopa + O2 = (3R)-7,8-dihydroxy-1,2,3,4-tetrahydroisoquinoline-3-carboxylate + H2O2. It participates in secondary metabolite biosynthesis. Its function is as follows. Amino acid oxidase; part of the gene cluster that mediates the biosynthesis of the isoquinoline alkaloids fumisoquin A, fumisoquin B and fumisoquin C; as well as small amounts of fumipyrrole as a shunt metabolite. The products of the cluster lead to a brown coloration and are important for growth and conidiation. The nonribosomal peptide synthetase-like protein fsqF, which lacks a canonical condensation domain, is required for addition of a serine-derived dehydroalanine moiety to activated tyrosine but is not essential for the subsequent steps leading to isoquinoline formation. A different enzyme, most likely the ATP-grasp enzyme fsqD, is responsible for activation of tyrosine. Three additional enzymes encoded by the fsq cluster, the N-methyltransferase fsqC, the phenol 2-monooxygenase fsqG and the FAD-dependent oxidase fsqB, catalyze the formation of the isoquinoline ring system in the fumisoquins. FsqB converts the fspF thiolation domain-bound (2S,4S,5S)-2-amino-6-(3,4-dihydroxyphenyl)-4-hydroxy-5-(methylamino)hexanoyl into isoquinoline. The cyclization most likely proceeds via a two-step mechanism, beginning with FAD-dependent oxidation of the methyl group to an iminium species followed by electrophilic attack on the deprotonated phenol. Is able to convert N-methyl-3,4-dihydroxy-DL-phenylalanine (N-methyl-DOPA) directly into cyclic isoquinoline, in vitro. The absence of the meta-hydroxyl group, as in L-N-methyl-tyrosine, leads to a 25-fold lower rate of reduction and the formation of the demethylated product L-tyrosine, instead of a cyclic product. Does not accept the D-stereoisomer of N-methyltyrosine, in contrast to N-methyl-DOPA, for which both stereoisomers are oxidized with similar rates. The chain is Amino acid oxidase fsqB from Aspergillus fumigatus (strain ATCC MYA-4609 / CBS 101355 / FGSC A1100 / Af293) (Neosartorya fumigata).